The primary structure comprises 121 residues: MVQIVISSTGAEGLAEWVLMELQGEIEARYSTGLAGNLLGDLHYTTEGIPVLIVGHHILYGKIIHLEKPFAVLVKHTPGKQDCDELGRETGTQYLVTALIKNKILFKTRPKPIITNVPKKV.

This sequence belongs to the CTF8 family. Component of the CTF18-RFC complex, which consists of CTF18, CTF8, DSCC1, RFC2, RFC3, RFC4 and RFC5. The CTF18-RFC complex does not interact with the Rad9/Rad1/Hus1 complex. The CTF18-RFC complex interacts with POLH. CTF18/CTF8/DSCC1 associate with PCNA. CTF8 exists as a dimer with DSCC1.

It localises to the nucleus. Functionally, chromosome cohesion factor involved in sister chromatid cohesion and fidelity of chromosome transmission. Component of one of the cell nuclear antigen loader complexes, CTF18-replication factor C (CTF18-RFC), which consists of CTF18, CTF8, DSCC1, RFC2, RFC3, RFC4 and RFC5. The CTF18-RFC complex binds to single-stranded and primed DNAs and has weak ATPase activity that is stimulated the presence of primed DNA, replication protein A (RPA) and proliferating cell nuclear antigen (PCNA). The CTF18-RFC complex catalyzes the ATP-dependent loading of PCNA onto primed and gapped DNA. It also interacts with and stimulates POLH, which is suggestive of a protein network that coordinates DNA repair, recombination and chromosome cohesion reactions with replication fork progression. This Rattus norvegicus (Rat) protein is Chromosome transmission fidelity protein 8 homolog.